Reading from the N-terminus, the 968-residue chain is RNA polymerase-associated protein RapA (968 aa).

Positions 164-334 (DVGRRHAPRV…FARLRLLDPN (171 aa)) constitute a Helicase ATP-binding domain. 177–184 (DEVGLGKT) is a binding site for ATP. A DEAH box motif is present at residues 280–283 (DEAH). In terms of domain architecture, Helicase C-terminal spans 490–662 (RVEWLMGYLT…YLASPVQTEG (173 aa)).

This sequence belongs to the SNF2/RAD54 helicase family. RapA subfamily. In terms of assembly, interacts with the RNAP. Has a higher affinity for the core RNAP than for the holoenzyme. Its ATPase activity is stimulated by binding to RNAP.

Transcription regulator that activates transcription by stimulating RNA polymerase (RNAP) recycling in case of stress conditions such as supercoiled DNA or high salt concentrations. Probably acts by releasing the RNAP, when it is trapped or immobilized on tightly supercoiled DNA. Does not activate transcription on linear DNA. Probably not involved in DNA repair. This is RNA polymerase-associated protein RapA from Shigella sonnei (strain Ss046).